The chain runs to 365 residues: Heat-inducible transcription repressor HrcA (365 aa).

This sequence belongs to the HrcA family.

Its function is as follows. Negative regulator of class I heat shock genes (grpE-dnaK-dnaJ and groELS operons). Prevents heat-shock induction of these operons. The protein is Heat-inducible transcription repressor HrcA of Trichormus variabilis (strain ATCC 29413 / PCC 7937) (Anabaena variabilis).